The sequence spans 397 residues: Lysophospholipid transporter LplT (397 aa).

The next 11 membrane-spanning stretches (helical) occupy residues 21-41, 53-73, 91-111, 139-159, 164-184, 229-249, 257-277, 281-301, 304-324, 344-364, and 372-392; these read SAQFLSAFGDNALLFATLALL, ILQMVFVGAYILFAPFVGQVA, LGAASICFGFNPFIGYTLVGI, LMESSTIAAILLGSVAGGVLA, LAALGICAVVYAGAVVANLFI, WGAGVTLRFLLVLWVPTALGI, YLNAMVAVGIVVGAGAAAKLV, TVRRCMPAGILIGVGVLFFSL, ALLPAYGLLILIGILGGFFIV, IAVQNLGENTAMLLMLGLYSL, and VVGIGVGFGALFALAITGLWI.

It belongs to the major facilitator superfamily. LplT (TC 2.A.1.42) family.

It is found in the cell inner membrane. In terms of biological role, catalyzes the facilitated diffusion of 2-acyl-glycero-3-phosphoethanolamine (2-acyl-GPE) into the cell. The polypeptide is Lysophospholipid transporter LplT (Enterobacter sp. (strain 638)).